The sequence spans 412 residues: 3,4-dihydroxybenzoate--[aryl-carrier protein] ligase (412 aa).

Belongs to the ATP-dependent AMP-binding enzyme family.

The enzyme catalyses holo-[aryl-carrier protein] + 3,4-dihydroxybenzoate + ATP = 3,4-dihydroxybenzoyl-[aryl-carrier protein] + AMP + diphosphate. It carries out the reaction 3,4-dihydroxybenzoate + ATP + H(+) = 3,4-dihydroxybenzoyl-5'-AMP + diphosphate. The catalysed reaction is 3,4-dihydroxybenzoyl-5'-AMP + holo-[aryl-carrier protein] = 3,4-dihydroxybenzoyl-[aryl-carrier protein] + AMP + H(+). Its pathway is siderophore biosynthesis; petrobactin biosynthesis. Its activity is regulated as follows. ATP-pyrophosphate exchange is inhibited in vitro by nonhydrolyzable acylsulfamate analogs that mimic the AsbC-bound intermediate 3,4-dihydroxybenzoyl-AMP. In terms of biological role, involved in the biosynthesis of petrobactin, a catecholate siderophore that functions in both iron acquisition and virulence. Catalyzes the adenylation of 3,4-dihydroxybenzoate (3,4-DHBA) to the corresponding AMP ester, followed by the transfer of the activated unit to the phosphopantetheine thiol of the aryl-carrier protein AsbD. In Bacillus anthracis, this protein is 3,4-dihydroxybenzoate--[aryl-carrier protein] ligase.